The sequence spans 291 residues: MNSGYLHFPDFDPVIFSLGPVSLHWYGLMYLVGFVFAMWLATRRANRPGSGWTKNEVENLLYAGFLGVFLGGRIGYVLFYNLPVFLADPLYLFRVWDGGMSFHGGLIGVILVMIIFARRTKRTFFQVSDFIAPLIPFGLGAGRLGNFINGELWGRVDPSFHYTMIFPGSRAEDLALLPTHPEWQSLFDTYGALPRHASQLYELALEGVVLFLILNLFIRKPRPTGSVSGLFLIGYGLFRIIVEFFRQPDAQFTGGWVQYISMGQILSIPMVLAGIIMMVWAYRHRPQQQNS.

7 helical membrane-spanning segments follow: residues 21 to 41, 60 to 80, 96 to 116, 130 to 150, 198 to 218, 225 to 245, and 260 to 280; these read VSLHWYGLMYLVGFVFAMWLA, LLYAGFLGVFLGGRIGYVLFY, WDGGMSFHGGLIGVILVMIIF, FIAPLIPFGLGAGRLGNFING, SQLYELALEGVVLFLILNLFI, GSVSGLFLIGYGLFRIIVEFF, and ISMGQILSIPMVLAGIIMMVW. An a 1,2-diacyl-sn-glycero-3-phospho-(1'-sn-glycerol)-binding site is contributed by Arg143.

The protein belongs to the Lgt family.

The protein localises to the cell inner membrane. The catalysed reaction is L-cysteinyl-[prolipoprotein] + a 1,2-diacyl-sn-glycero-3-phospho-(1'-sn-glycerol) = an S-1,2-diacyl-sn-glyceryl-L-cysteinyl-[prolipoprotein] + sn-glycerol 1-phosphate + H(+). Its pathway is protein modification; lipoprotein biosynthesis (diacylglyceryl transfer). Its function is as follows. Catalyzes the transfer of the diacylglyceryl group from phosphatidylglycerol to the sulfhydryl group of the N-terminal cysteine of a prolipoprotein, the first step in the formation of mature lipoproteins. The protein is Phosphatidylglycerol--prolipoprotein diacylglyceryl transferase of Klebsiella pneumoniae (strain 342).